Here is a 277-residue protein sequence, read N- to C-terminus: Large ribosomal subunit protein uL2 (277 aa).

Disordered regions lie at residues 24 to 55 and 221 to 277; these read ITTS…RHHG and RGSV…RKKK.

It belongs to the universal ribosomal protein uL2 family. Part of the 50S ribosomal subunit. Forms a bridge to the 30S subunit in the 70S ribosome.

Functionally, one of the primary rRNA binding proteins. Required for association of the 30S and 50S subunits to form the 70S ribosome, for tRNA binding and peptide bond formation. It has been suggested to have peptidyltransferase activity; this is somewhat controversial. Makes several contacts with the 16S rRNA in the 70S ribosome. This chain is Large ribosomal subunit protein uL2, found in Listeria welshimeri serovar 6b (strain ATCC 35897 / DSM 20650 / CCUG 15529 / CIP 8149 / NCTC 11857 / SLCC 5334 / V8).